A 101-amino-acid polypeptide reads, in one-letter code: Urease subunit beta (101 aa).

The protein belongs to the urease beta subunit family. As to quaternary structure, heterotrimer of UreA (gamma), UreB (beta) and UreC (alpha) subunits. Three heterotrimers associate to form the active enzyme.

The protein localises to the cytoplasm. The enzyme catalyses urea + 2 H2O + H(+) = hydrogencarbonate + 2 NH4(+). Its pathway is nitrogen metabolism; urea degradation; CO(2) and NH(3) from urea (urease route): step 1/1. In Saccharophagus degradans (strain 2-40 / ATCC 43961 / DSM 17024), this protein is Urease subunit beta.